We begin with the raw amino-acid sequence, 208 residues long: ATP-dependent Clp protease proteolytic subunit (208 aa).

The Nucleophile role is filled by Ser106. The active site involves His131.

This sequence belongs to the peptidase S14 family. Fourteen ClpP subunits assemble into 2 heptameric rings which stack back to back to give a disk-like structure with a central cavity, resembling the structure of eukaryotic proteasomes.

It is found in the cytoplasm. The enzyme catalyses Hydrolysis of proteins to small peptides in the presence of ATP and magnesium. alpha-casein is the usual test substrate. In the absence of ATP, only oligopeptides shorter than five residues are hydrolyzed (such as succinyl-Leu-Tyr-|-NHMec, and Leu-Tyr-Leu-|-Tyr-Trp, in which cleavage of the -Tyr-|-Leu- and -Tyr-|-Trp bonds also occurs).. Functionally, cleaves peptides in various proteins in a process that requires ATP hydrolysis. Has a chymotrypsin-like activity. Plays a major role in the degradation of misfolded proteins. The sequence is that of ATP-dependent Clp protease proteolytic subunit from Dinoroseobacter shibae (strain DSM 16493 / NCIMB 14021 / DFL 12).